Reading from the N-terminus, the 250-residue chain is Nuclear transcription factor Y subunit C-4 (250 aa).

Residues 1–10 (MDNNNNNNNQ) show a composition bias toward low complexity. 2 disordered regions span residues 1–35 (MDNNNNNNNQQPPPTSVYPPGSAVTTVIPPPPSGS) and 209–250 (GVYA…DSQG). The span at 214 to 225 (PPSQAWQSVWQN) shows a compositional bias: polar residues. A compositionally biased stretch (gly residues) spans 227–242 (AGGGDDVSYGSGGSSG).

The protein belongs to the NFYC/HAP5 subunit family. As to quaternary structure, heterotrimeric transcription factor composed of three components, NF-YA, NF-YB and NF-YC. NF-YB and NF-YC must interact and dimerize for NF-YA association and DNA binding. In terms of tissue distribution, ubiquitous. Present in etiolated seedlings.

Its subcellular location is the nucleus. Its function is as follows. Stimulates the transcription of various genes by recognizing and binding to a CCAAT motif in promoters. Involved in the abscisic acid (ABA) signaling pathway. The sequence is that of Nuclear transcription factor Y subunit C-4 (NFYC4) from Arabidopsis thaliana (Mouse-ear cress).